The sequence spans 380 residues: uncharacterized protein (380 aa).

Residues 251–275 (NMSERPPTPSHDTASSSTSTDPNPL) form a disordered region. Positions 260-272 (SHDTASSSTSTDP) are enriched in low complexity.

This is an uncharacterized protein from Allium cepa var. aggregatum (Shallot).